The primary structure comprises 678 residues: uncharacterized protein (678 aa).

The next 2 helical transmembrane spans lie at 14 to 34 (LMFAGAGPGPMLAAASAWTGL) and 180 to 200 (GAVIIAGFPFLDLGNVTIGGF).

Belongs to the mycobacterial PPE family.

It localises to the cell membrane. This is an uncharacterized protein from Mycobacterium tuberculosis (strain CDC 1551 / Oshkosh).